The primary structure comprises 1035 residues: Translation initiation factor IF-2 (1035 aa).

The span at 56–66 shows a compositional bias: basic and acidic residues; that stretch reads KDDKSNTDDNK. 2 disordered regions span residues 56–80 and 114–402; these read KDDK…SSEA and ANDA…VIKN. Residues 68–78 show a composition bias toward polar residues; sequence ASAHSVAQHSS. Basic and acidic residues-rich tracts occupy residues 114–137 and 146–200; these read ANDA…RVET and LVRE…EIKD. The segment covering 219-228 has biased composition (polar residues); sequence DSATNVNLNE. The segment covering 229-238 has biased composition (basic and acidic residues); it reads SIDKDKKTND. Residues 239–253 show a composition bias toward polar residues; sequence NRQVSTDNSAVNNEE. The span at 259–315 shows a compositional bias: basic and acidic residues; sequence LNKKDMDKKNNNKKNEAKKNAEKKNEAKKNEKNDNKGGNAKKNEHRSPDMKKNDSNR. Residues 316-325 are compositionally biased toward polar residues; that stretch reads PQDANKQNSK. Basic and acidic residues-rich tracts occupy residues 327-347 and 354-385; these read AADK…EIPK and QKEE…KEQP. The 170-residue stretch at 537–706 folds into the tr-type G domain; the sequence is PRPPVVVVMG…LLAADMLELK (170 aa). The G1 stretch occupies residues 546–553; that stretch reads GHVDHGKT. Position 546–553 (546–553) interacts with GTP; sequence GHVDHGKT. The tract at residues 571–575 is G2; the sequence is GITQH. The segment at 592–595 is G3; sequence DTPG. GTP is bound by residues 592-596 and 646-649; these read DTPGH and NKID. The tract at residues 646 to 649 is G4; it reads NKID. Residues 682-684 are G5; the sequence is SAK.

The protein belongs to the TRAFAC class translation factor GTPase superfamily. Classic translation factor GTPase family. IF-2 subfamily.

The protein localises to the cytoplasm. Its function is as follows. One of the essential components for the initiation of protein synthesis. Protects formylmethionyl-tRNA from spontaneous hydrolysis and promotes its binding to the 30S ribosomal subunits. Also involved in the hydrolysis of GTP during the formation of the 70S ribosomal complex. This Acetivibrio thermocellus (strain ATCC 27405 / DSM 1237 / JCM 9322 / NBRC 103400 / NCIMB 10682 / NRRL B-4536 / VPI 7372) (Clostridium thermocellum) protein is Translation initiation factor IF-2.